The sequence spans 361 residues: tRNA/tmRNA (uracil-C(5))-methyltransferase (361 aa).

5 residues coordinate S-adenosyl-L-methionine: glutamine 185, tyrosine 213, asparagine 218, glutamate 234, and aspartate 294. Residue cysteine 319 is the Nucleophile of the active site. Catalysis depends on glutamate 353, which acts as the Proton acceptor.

The protein belongs to the class I-like SAM-binding methyltransferase superfamily. RNA M5U methyltransferase family. TrmA subfamily.

It catalyses the reaction uridine(54) in tRNA + S-adenosyl-L-methionine = 5-methyluridine(54) in tRNA + S-adenosyl-L-homocysteine + H(+). It carries out the reaction uridine(341) in tmRNA + S-adenosyl-L-methionine = 5-methyluridine(341) in tmRNA + S-adenosyl-L-homocysteine + H(+). Functionally, dual-specificity methyltransferase that catalyzes the formation of 5-methyluridine at position 54 (m5U54) in all tRNAs, and that of position 341 (m5U341) in tmRNA (transfer-mRNA). In Pseudomonas savastanoi pv. phaseolicola (strain 1448A / Race 6) (Pseudomonas syringae pv. phaseolicola (strain 1448A / Race 6)), this protein is tRNA/tmRNA (uracil-C(5))-methyltransferase.